The sequence spans 231 residues: uncharacterized protein (231 aa).

The segment at Tyr-43–Glu-76 adopts an SWIM-type zinc-finger fold.

This is an uncharacterized protein from Methanocaldococcus jannaschii (strain ATCC 43067 / DSM 2661 / JAL-1 / JCM 10045 / NBRC 100440) (Methanococcus jannaschii).